The following is a 272-amino-acid chain: MAHYFVGDIQGCYSELQLLLQKVAFNPSKDQLWAVGDLVARGTESLATLRFFQSLQDSAKVVLGNHDLHLLALHGKLKRPHPQDHLDELLNAPDIDNLVNWLRQQPLVRTLPEHNIIMTHAGVPPQWDIAILEHEAEQVSFALQQDDYLSALIAQMYTEDAEHWSPSLHGIDRLRYCINALTRMRFLHLDGRLDFKCKLPPSEQHSTELRPWFEFASKTAPQNTLIFGHWAALMGQTGNPHVVALDTGCCWGEHLTLWHLEKNEIITQKRLI.

The protein belongs to the Ap4A hydrolase family.

The enzyme catalyses P(1),P(4)-bis(5'-adenosyl) tetraphosphate + H2O = 2 ADP + 2 H(+). Functionally, hydrolyzes diadenosine 5',5'''-P1,P4-tetraphosphate to yield ADP. The protein is Bis(5'-nucleosyl)-tetraphosphatase, symmetrical of Shewanella frigidimarina (strain NCIMB 400).